Consider the following 98-residue polypeptide: Beta-elicitin MGM-beta (98 aa).

Intrachain disulfides connect Cys-3-Cys-71, Cys-27-Cys-56, and Cys-51-Cys-95.

Belongs to the elicitin family.

It is found in the secreted. Induces local and distal defense responses (incompatible hypersensitive reaction) in plants from the solanaceae and cruciferae families. Elicits leaf necrosis and causes the accumulation of pathogenesis-related proteins. Might interact with the lipidic molecules of the plasma membrane. In Phytophthora megasperma (Potato pink rot fungus), this protein is Beta-elicitin MGM-beta.